The following is a 144-amino-acid chain: uncharacterized protein (144 aa).

The 91-residue stretch at 50–140 (NQDKAIVVDT…YWKTDNLPLI (91 aa)) folds into the Rhodanese domain.

This is an uncharacterized protein from Buchnera aphidicola subsp. Acyrthosiphon pisum (strain APS) (Acyrthosiphon pisum symbiotic bacterium).